The following is a 241-amino-acid chain: SURF1-like protein (241 aa).

2 helical membrane passes run 5–25 and 199–219; these read LTVL…LNRL and LEYA…YRIY.

Belongs to the SURF1 family.

It localises to the cell membrane. In Rickettsia bellii (strain RML369-C), this protein is SURF1-like protein.